A 456-amino-acid polypeptide reads, in one-letter code: Arginine biosynthesis bifunctional protein ArgJ, mitochondrial (456 aa).

Residues Thr-184, Lys-213, Thr-224, Glu-311, Asn-451, and Thr-456 each contribute to the substrate site. Thr-224 acts as the Nucleophile in catalysis.

This sequence belongs to the ArgJ family. Heterodimer of an alpha and a beta chain. In terms of processing, the alpha and beta chains are autoproteolytically processed from a single precursor protein within the mitochondrion.

It is found in the mitochondrion matrix. It catalyses the reaction N(2)-acetyl-L-ornithine + L-glutamate = N-acetyl-L-glutamate + L-ornithine. The catalysed reaction is L-glutamate + acetyl-CoA = N-acetyl-L-glutamate + CoA + H(+). It participates in amino-acid biosynthesis; L-arginine biosynthesis; L-ornithine and N-acetyl-L-glutamate from L-glutamate and N(2)-acetyl-L-ornithine (cyclic): step 1/1. It functions in the pathway amino-acid biosynthesis; L-arginine biosynthesis; N(2)-acetyl-L-ornithine from L-glutamate: step 1/4. Its function is as follows. Catalyzes two activities which are involved in the cyclic version of arginine biosynthesis: the synthesis of acetylglutamate from glutamate and acetyl-CoA, and of ornithine by transacetylation between acetylornithine and glutamate. The chain is Arginine biosynthesis bifunctional protein ArgJ, mitochondrial from Aspergillus niger (strain ATCC MYA-4892 / CBS 513.88 / FGSC A1513).